A 409-amino-acid chain; its full sequence is N-carbamoyl-L-amino acid amidohydrolase (409 aa).

The a divalent metal cation site is built by H79, D90, E125, and H189. Residues Q192, H225, N273, R286, and A355 each coordinate an N-carbamoyl-L-alpha-amino acid. The involved in dimerization stretch occupies residues 208–325; the sequence is GIAGLIWVKF…TTERLQEMAP (118 aa). Residue H380 coordinates a divalent metal cation.

This sequence belongs to the peptidase M20 family. As to quaternary structure, homodimer. Mn(2+) is required as a cofactor. Ni(2+) serves as cofactor. The cofactor is Co(2+). Requires Fe(2+) as cofactor.

It carries out the reaction an N-carbamoyl-L-alpha-amino acid + H2O + 2 H(+) = an L-alpha-amino acid + NH4(+) + CO2. The catalysed reaction is N-carbamoyl-L-methionine + H2O + 2 H(+) = L-methionine + NH4(+) + CO2. The enzyme catalyses N-acetyl-L-methionine + H2O = L-methionine + acetate. It catalyses the reaction N-carbamoyl-L-alanine + H2O + 2 H(+) = L-alanine + NH4(+) + CO2. It carries out the reaction N-carbamoyl-L-glutamate + H2O + 2 H(+) = L-glutamate + NH4(+) + CO2. The catalysed reaction is N-carbamoylglycine + H2O + 2 H(+) = glycine + NH4(+) + CO2. The enzyme catalyses N-carbamoyl-L-leucine + H2O + 2 H(+) = L-leucine + NH4(+) + CO2. Catalyzes the hydrolysis of aliphatic N-carbamoyl-L-alpha-amino acids to free L-alpha-amino acids. Is strictly L-specific since it is inactive toward N-carbamoyl-D-alpha-amino acids. Is not able to use aromatic N-carbamoyl-L-alpha-amino acids like N-carbamoyl-L-tryptophan and N-carbamoyl-L-phenylalanine as substrates, but is also able to hydrolyze N-acetyl-L-methionine. This is N-carbamoyl-L-amino acid amidohydrolase from Geobacillus stearothermophilus (Bacillus stearothermophilus).